Here is a 493-residue protein sequence, read N- to C-terminus: Transmembrane and coiled-coil domain-containing protein 6 (493 aa).

Positions G15 to E84 form a coiled coil. A run of 2 helical transmembrane segments spans residues V338–P358 and P386–C406.

The protein localises to the membrane. This chain is Transmembrane and coiled-coil domain-containing protein 6 (TMCO6), found in Homo sapiens (Human).